Reading from the N-terminus, the 382-residue chain is ATP phosphoribosyltransferase regulatory subunit (382 aa).

The protein belongs to the class-II aminoacyl-tRNA synthetase family. HisZ subfamily. As to quaternary structure, heteromultimer composed of HisG and HisZ subunits.

The protein localises to the cytoplasm. It participates in amino-acid biosynthesis; L-histidine biosynthesis; L-histidine from 5-phospho-alpha-D-ribose 1-diphosphate: step 1/9. Its function is as follows. Required for the first step of histidine biosynthesis. May allow the feedback regulation of ATP phosphoribosyltransferase activity by histidine. In Lacticaseibacillus casei (strain BL23) (Lactobacillus casei), this protein is ATP phosphoribosyltransferase regulatory subunit.